We begin with the raw amino-acid sequence, 415 residues long: Translation initiation factor 2 subunit gamma (415 aa).

The tr-type G domain maps to 7–206 (QPEVNIGVVG…GIEEYIKTPY (200 aa)). Positions 16–23 (GHVDHGKT) are G1. Asp-19, Thr-23, Gly-44, and Thr-46 together coordinate Mg(2+). 19–24 (DHGKTT) is a binding site for GTP. The interval 44-48 (GMTIK) is G2. Zn(2+) is bound by residues Cys-59, Cys-62, Cys-74, and Cys-77. The G3 stretch occupies residues 93–96 (DAPG). Residues 149 to 152 (NKVD) and 184 to 186 (SAL) contribute to the GTP site. Positions 149-152 (NKVD) are G4. The G5 stretch occupies residues 184 to 186 (SAL).

It belongs to the TRAFAC class translation factor GTPase superfamily. Classic translation factor GTPase family. EIF2G subfamily. As to quaternary structure, heterotrimer composed of an alpha, a beta and a gamma chain. Requires Mg(2+) as cofactor.

The catalysed reaction is GTP + H2O = GDP + phosphate + H(+). Its function is as follows. eIF-2 functions in the early steps of protein synthesis by forming a ternary complex with GTP and initiator tRNA. The polypeptide is Translation initiation factor 2 subunit gamma (Saccharolobus solfataricus (strain ATCC 35092 / DSM 1617 / JCM 11322 / P2) (Sulfolobus solfataricus)).